Here is a 571-residue protein sequence, read N- to C-terminus: Acetolactate synthase large subunit (571 aa).

Residue E51 participates in thiamine diphosphate binding. Residues R153, 261–282 (HGTY…IGVR), and 304–323 (DIDP…IVGD) each bind FAD. The segment at 394–474 (QHQMFTALYY…VLILNLNNSS (81 aa)) is thiamine pyrophosphate binding. Residues D445 and N472 each contribute to the Mg(2+) site.

It belongs to the TPP enzyme family. In terms of assembly, dimer of large and small chains. Mg(2+) serves as cofactor. Thiamine diphosphate is required as a cofactor.

The catalysed reaction is 2 pyruvate + H(+) = (2S)-2-acetolactate + CO2. Its pathway is amino-acid biosynthesis; L-isoleucine biosynthesis; L-isoleucine from 2-oxobutanoate: step 1/4. It participates in amino-acid biosynthesis; L-valine biosynthesis; L-valine from pyruvate: step 1/4. The sequence is that of Acetolactate synthase large subunit (ilvI) from Buchnera aphidicola subsp. Acyrthosiphon pisum (strain APS) (Acyrthosiphon pisum symbiotic bacterium).